Reading from the N-terminus, the 1204-residue chain is ATP-dependent helicase/nuclease subunit A (1204 aa).

The 471-residue stretch at 2-472 folds into the UvrD-like helicase ATP-binding domain; sequence PQFTKEQEKA…ILLSDNFRST (471 aa). 23-30 provides a ligand contact to ATP; that stretch reads ASAGSGKT. Residues 500–783 enclose the UvrD-like helicase C-terminal domain; that stretch reads GQLIFGAKYY…RLMTIHGSKG (284 aa).

The protein belongs to the helicase family. AddA subfamily. Heterodimer of AddA and AddB/RexB. Mg(2+) serves as cofactor.

It catalyses the reaction Couples ATP hydrolysis with the unwinding of duplex DNA by translocating in the 3'-5' direction.. It carries out the reaction ATP + H2O = ADP + phosphate + H(+). Functionally, the heterodimer acts as both an ATP-dependent DNA helicase and an ATP-dependent, dual-direction single-stranded exonuclease. Recognizes the chi site generating a DNA molecule suitable for the initiation of homologous recombination. The AddA nuclease domain is required for chi fragment generation; this subunit has the helicase and 3' -&gt; 5' nuclease activities. This Lactobacillus helveticus (strain DPC 4571) protein is ATP-dependent helicase/nuclease subunit A.